The chain runs to 75 residues: Metallothionein-like protein 1 (75 aa).

It belongs to the metallothionein superfamily. Type 15 family.

Metallothioneins have a high content of cysteine residues that bind various heavy metals. The sequence is that of Metallothionein-like protein 1 from Cicer arietinum (Chickpea).